The chain runs to 357 residues: UDP-N-acetylglucosamine--N-acetylmuramyl-(pentapeptide) pyrophosphoryl-undecaprenol N-acetylglucosamine transferase (357 aa).

UDP-N-acetyl-alpha-D-glucosamine is bound by residues 15–17 (SGG), asparagine 125, serine 190, and glutamine 290.

It belongs to the glycosyltransferase 28 family. MurG subfamily.

It localises to the cell inner membrane. It catalyses the reaction di-trans,octa-cis-undecaprenyl diphospho-N-acetyl-alpha-D-muramoyl-L-alanyl-D-glutamyl-meso-2,6-diaminopimeloyl-D-alanyl-D-alanine + UDP-N-acetyl-alpha-D-glucosamine = di-trans,octa-cis-undecaprenyl diphospho-[N-acetyl-alpha-D-glucosaminyl-(1-&gt;4)]-N-acetyl-alpha-D-muramoyl-L-alanyl-D-glutamyl-meso-2,6-diaminopimeloyl-D-alanyl-D-alanine + UDP + H(+). The protein operates within cell wall biogenesis; peptidoglycan biosynthesis. In terms of biological role, cell wall formation. Catalyzes the transfer of a GlcNAc subunit on undecaprenyl-pyrophosphoryl-MurNAc-pentapeptide (lipid intermediate I) to form undecaprenyl-pyrophosphoryl-MurNAc-(pentapeptide)GlcNAc (lipid intermediate II). The protein is UDP-N-acetylglucosamine--N-acetylmuramyl-(pentapeptide) pyrophosphoryl-undecaprenol N-acetylglucosamine transferase of Chlamydia pneumoniae (Chlamydophila pneumoniae).